Here is a 355-residue protein sequence, read N- to C-terminus: MQRKLIEIERRYDELTQLLSDPEVIGNQSEWQKYAKAQAGMTDIVEAFREYSEVVKHLEETQGLLEEKLDPEFKEMAELELEELTEKRDELEEKMRILLLPKDPNDDKNVIMEIRAGAGGEEAALFAGDLYRMYTKYAEHQGWRTELLSASYTDIGGFKEIIFLIEGQGAYSKLKFESGVHRVQRVPTTESGGRIHTSTTTVAVLPEAEEVDVAINPNDLRIDIFCSSGPGGQSVNTTQSAVRITHVPTGTVVSCQDEKSQLKNKEKALRVLRARLLERAQEEAMGELASERRSQVGTGDRSERIRTYNFPQGRVTDHRIGLTLHRLDSILLGELDEVINALITTDQAERLKSEA.

An N5-methylglutamine modification is found at Gln-233.

It belongs to the prokaryotic/mitochondrial release factor family. In terms of processing, methylated by PrmC. Methylation increases the termination efficiency of RF1.

It localises to the cytoplasm. Functionally, peptide chain release factor 1 directs the termination of translation in response to the peptide chain termination codons UAG and UAA. The protein is Peptide chain release factor 1 of Desulfitobacterium hafniense (strain DSM 10664 / DCB-2).